The following is a 229-amino-acid chain: Heptaprenylglyceryl phosphate synthase (229 aa).

Position 12 (lysine 12) interacts with sn-glycerol 1-phosphate. The Mg(2+) site is built by aspartate 14 and serine 40. Sn-glycerol 1-phosphate contacts are provided by residues 159-164 (YLEYSG), glycine 189, and 209-210 (GN).

It belongs to the GGGP/HepGP synthase family. Group I subfamily. Homodimer. Mg(2+) is required as a cofactor.

The catalysed reaction is sn-glycerol 1-phosphate + all-trans-heptaprenyl diphosphate = 3-heptaprenyl-sn-glycero-1-phosphate + diphosphate. It functions in the pathway membrane lipid metabolism; glycerophospholipid metabolism. Its function is as follows. Prenyltransferase that catalyzes in vivo the transfer of the heptaprenyl moiety of heptaprenyl pyrophosphate (HepPP; 35 carbon atoms) to the C3 hydroxyl of sn-glycerol-1-phosphate (G1P), producing heptaprenylglyceryl phosphate (HepGP). This reaction is an ether-bond-formation step in the biosynthesis of archaea-type G1P-based membrane lipids found in Bacillales. The polypeptide is Heptaprenylglyceryl phosphate synthase (Bacillus cereus (strain ATCC 14579 / DSM 31 / CCUG 7414 / JCM 2152 / NBRC 15305 / NCIMB 9373 / NCTC 2599 / NRRL B-3711)).